The chain runs to 39 residues: Cytochrome b6-f complex subunit 5 (39 aa).

The chain crosses the membrane as a helical span at residues 5–25 (LLCGIVLGLVPITIVGLFVSA).

Belongs to the PetG family. In terms of assembly, the 4 large subunits of the cytochrome b6-f complex are cytochrome b6, subunit IV (17 kDa polypeptide, PetD), cytochrome f and the Rieske protein, while the 4 small subunits are PetG, PetL, PetM and PetN. The complex functions as a dimer.

The protein localises to the cellular thylakoid membrane. Component of the cytochrome b6-f complex, which mediates electron transfer between photosystem II (PSII) and photosystem I (PSI), cyclic electron flow around PSI, and state transitions. PetG is required for either the stability or assembly of the cytochrome b6-f complex. The chain is Cytochrome b6-f complex subunit 5 from Prochlorococcus marinus (strain MIT 9211).